The primary structure comprises 1142 residues: Melanoma-associated antigen C1 (1142 aa).

Residues 1-132 are disordered; it reads MGDKDMPTAG…DVQSPLQNPA (132 aa). Over residues 13–42 the composition is skewed to low complexity; it reads SLLQSSSESPQSCPEGEDSQSPLQIPQSSP. Ser-63 carries the post-translational modification Phosphoserine. Residues 76 to 87 show a composition bias toward low complexity; sequence SQSPLQIPQSSP. Over residues 92 to 103 the composition is skewed to polar residues; the sequence is TQSPLQNSQSSP. A phosphoserine mark is found at Ser-207 and Ser-382. Disordered stretches follow at residues 502 to 778 and 791 to 893; these read TQST…LQRP and LQSS…SLTD. The segment covering 614–626 has biased composition (polar residues); it reads SPLQGEEFQSSLQ. A compositionally biased stretch (low complexity) spans 627–659; that stretch reads SPVSICSSSTPSSLPQSFPESSQSPPEGPVQSP. Positions 671–680 are enriched in polar residues; the sequence is HSQSPLQSPE. Low complexity-rich tracts occupy residues 741 to 762 and 807 to 889; these read QSPV…FPES and QSPL…LESD. In terms of domain architecture, MAGE spans 908–1106; that stretch reads LDEKVDELAR…ITFPSSYKDA (199 aa). Ser-1063 carries the phosphoserine modification. The interval 1118–1142 is disordered; the sequence is IDTTDDSTATESASSSVMSPSFSSE. Residues 1123-1142 show a composition bias toward low complexity; it reads DSTATESASSSVMSPSFSSE.

As to expression, expressed in testis and in tumors of a wide variety of histologic types.

It localises to the cytoplasm. In Homo sapiens (Human), this protein is Melanoma-associated antigen C1 (MAGEC1).